The sequence spans 365 residues: Caffeic acid 3-O-methyltransferase (365 aa).

130–136 serves as a coordination point for substrate; it reads MNQDKVL. Residues 162–180 are substrate binding; it reads AFDYHGTDPRFNKVFNKGM. Gly-208, Asp-231, Asp-251, Met-252, and Lys-265 together coordinate S-adenosyl-L-methionine. Residue His-269 is the Proton acceptor of the active site.

Belongs to the class I-like SAM-binding methyltransferase superfamily. Cation-independent O-methyltransferase family. COMT subfamily. As to quaternary structure, homodimer.

It catalyses the reaction (E)-caffeate + S-adenosyl-L-methionine = (E)-ferulate + S-adenosyl-L-homocysteine + H(+). It functions in the pathway aromatic compound metabolism; phenylpropanoid biosynthesis. Its function is as follows. Catalyzes the conversion of caffeic acid to ferulic acid and of 5-hydroxyferulic acid to sinapic acid. The resulting products may subsequently be converted to the corresponding alcohols that are incorporated into lignins. This chain is Caffeic acid 3-O-methyltransferase (COMT1), found in Rosa chinensis (China rose).